The primary structure comprises 310 residues: MSRPIIIDCDPGHDDAIALILACASPELDIKAVTTSAGNQTPEKTLHNALRILTLVGRTDIPVAGGALQPLSRELIIADNVHGETGLDGPVLPEPAFEPQPCHAVELMAKILTEATEPVTLVPTGPLTNIALLLATHRELHSQIDSIVLMGGSAEAGNWTPAAEFNIYVDPEAADIVFKSGIPITMCGLDVTHRAQIMDEDIEKIRKINNPVAQVTAELLDFFMIYHRDPKWGFEGAPLHDPCTIAWLLEPELFASINCWVGIETQGSHTLGMTVVDRYQLTDNPINTTVLFDVNRQGFVDLLAERLANY.

Residue His-240 is part of the active site.

The protein belongs to the IUNH family. RihA subfamily.

Its function is as follows. Hydrolyzes cytidine or uridine to ribose and cytosine or uracil, respectively. This is Pyrimidine-specific ribonucleoside hydrolase RihA from Photobacterium profundum (strain SS9).